An 830-amino-acid polypeptide reads, in one-letter code: Ribosome biogenesis protein ERB1 (830 aa).

The segment at 1-141 (MAPQPLKVGT…ENKDLPVDEK (141 aa)) is disordered. 2 stretches are compositionally biased toward acidic residues: residues 35–44 (VSEESDEEFG) and 52–109 (MSDD…DSDS). Residues 131-141 (EENKDLPVDEK) are compositionally biased toward basic and acidic residues. WD repeat units follow at residues 481–520 (PGDTRVRSVSTSPDGQWIASGSEDGVVRVWDLGNGREVWR), 523–563 (LHAG…APHI), 660–698 (KTPGTIQRVAFHPSKPHFFAATQRYIRLYDLAAQKLIRT), 701–740 (SGVKWISSMDVHSGGDNLIIGSYDKKLAWFDMDLSAKPYK), 744–783 (YHNRALRSVAYHPTLPLFASASDDGTVHIFHCTVYTDLMQ), and 799–830 (IDGIGVLDLRWVPGKPWLVSSGADGEVRLWCS).

This sequence belongs to the WD repeat BOP1/ERB1 family. Component of the NOP7 complex, composed of ERB1, NOP7 and YTM1. The complex is held together by ERB1, which interacts with NOP7 via its N-terminal domain and with YTM1 via a high-affinity interaction between the seven-bladed beta-propeller domains of the 2 proteins. The NOP7 complex associates with the 66S pre-ribosome.

It is found in the nucleus. Its subcellular location is the nucleolus. The protein localises to the nucleoplasm. Its function is as follows. Component of the NOP7 complex, which is required for maturation of the 25S and 5.8S ribosomal RNAs and formation of the 60S ribosome. The polypeptide is Ribosome biogenesis protein ERB1 (Cryptococcus neoformans var. neoformans serotype D (strain B-3501A) (Filobasidiella neoformans)).